The following is a 633-amino-acid chain: Chaperone protein HtpG (633 aa).

The a; substrate-binding stretch occupies residues 1–341 (MTAPHETMSF…SADLPLNVSR (341 aa)). Residues 342-562 (ELLQESRDVK…EGDMSGYLQR (221 aa)) form a b region. A c region spans residues 563 to 633 (LLKQAGQKAP…YVQRVNKLLA (71 aa)).

Belongs to the heat shock protein 90 family. In terms of assembly, homodimer.

It localises to the cytoplasm. Molecular chaperone. Has ATPase activity. This Cupriavidus necator (strain ATCC 17699 / DSM 428 / KCTC 22496 / NCIMB 10442 / H16 / Stanier 337) (Ralstonia eutropha) protein is Chaperone protein HtpG.